Reading from the N-terminus, the 286-residue chain is MSEQNVNVYGADPSTSSIQSIQRTKIRTKHLQKMKAEGHKWAMLTAYDYSTARVFDEAGIPVLLVGDSAANVVYGYDTTVPVSADELLPLVRGVVRGAGHALVVADLPFGSYEPGPTAALAVATRFMKEGGAHAVKLEGGQRVAEQIACLTAAGIPVMAHIGFTPQSVNSLGGFRVQGRGGDAEQTVADAVAVAEAGAFSVVMEMVPTELATQITGKLTIPTIGIGAGLNCDAQVLVWQDMAGLSSGKVARFVKQYADIAGELRRAAMQYAEEVASAVFPAEEHCF.

Mg(2+) contacts are provided by Asp67 and Asp106. 3-methyl-2-oxobutanoate is bound by residues 67 to 68 (DS), Asp106, and Lys136. Glu138 contacts Mg(2+). The active-site Proton acceptor is Glu204.

It belongs to the PanB family. In terms of assembly, homodecamer; pentamer of dimers. The cofactor is Mg(2+).

The protein resides in the cytoplasm. It carries out the reaction 3-methyl-2-oxobutanoate + (6R)-5,10-methylene-5,6,7,8-tetrahydrofolate + H2O = 2-dehydropantoate + (6S)-5,6,7,8-tetrahydrofolate. It participates in cofactor biosynthesis; (R)-pantothenate biosynthesis; (R)-pantoate from 3-methyl-2-oxobutanoate: step 1/2. Its function is as follows. Catalyzes the reversible reaction in which hydroxymethyl group from 5,10-methylenetetrahydrofolate is transferred onto alpha-ketoisovalerate to form ketopantoate. This chain is 3-methyl-2-oxobutanoate hydroxymethyltransferase, found in Mycobacterium leprae (strain TN).